A 754-amino-acid polypeptide reads, in one-letter code: 5-methyltetrahydropteroyltriglutamate--homocysteine methyltransferase (754 aa).

5-methyltetrahydropteroyltri-L-glutamate contacts are provided by residues 17 to 20 (RELK) and K117. L-homocysteine-binding positions include 431–433 (IGS) and E484. Residues 431 to 433 (IGS) and E484 each bind L-methionine. 5-methyltetrahydropteroyltri-L-glutamate is bound by residues 515–516 (RC) and W561. Position 599 (D599) interacts with L-homocysteine. D599 serves as a coordination point for L-methionine. E605 contacts 5-methyltetrahydropteroyltri-L-glutamate. Positions 641, 643, and 665 each coordinate Zn(2+). H694 serves as the catalytic Proton donor. Residue C726 participates in Zn(2+) binding.

The protein belongs to the vitamin-B12 independent methionine synthase family. Zn(2+) is required as a cofactor.

It catalyses the reaction 5-methyltetrahydropteroyltri-L-glutamate + L-homocysteine = tetrahydropteroyltri-L-glutamate + L-methionine. It participates in amino-acid biosynthesis; L-methionine biosynthesis via de novo pathway; L-methionine from L-homocysteine (MetE route): step 1/1. Catalyzes the transfer of a methyl group from 5-methyltetrahydrofolate to homocysteine resulting in methionine formation. This is 5-methyltetrahydropteroyltriglutamate--homocysteine methyltransferase from Salmonella newport (strain SL254).